A 297-amino-acid polypeptide reads, in one-letter code: Phosphatidylglycerol--prolipoprotein diacylglyceryl transferase (297 aa).

4 consecutive transmembrane segments (helical) span residues 20 to 40 (FITI…GLFI), 57 to 77 (EILP…YVIF), 107 to 127 (WEGG…IIFF), and 133 to 153 (IHLK…QSIG). Arg-154 contacts a 1,2-diacyl-sn-glycero-3-phospho-(1'-sn-glycerol). Helical transmembrane passes span 193-213 (PTFL…ILIF), 225-245 (GFIS…IEGL), and 266-286 (AQFI…FLRL).

It belongs to the Lgt family.

It is found in the cell inner membrane. It carries out the reaction L-cysteinyl-[prolipoprotein] + a 1,2-diacyl-sn-glycero-3-phospho-(1'-sn-glycerol) = an S-1,2-diacyl-sn-glyceryl-L-cysteinyl-[prolipoprotein] + sn-glycerol 1-phosphate + H(+). It functions in the pathway protein modification; lipoprotein biosynthesis (diacylglyceryl transfer). Catalyzes the transfer of the diacylglyceryl group from phosphatidylglycerol to the sulfhydryl group of the N-terminal cysteine of a prolipoprotein, the first step in the formation of mature lipoproteins. This chain is Phosphatidylglycerol--prolipoprotein diacylglyceryl transferase, found in Prochlorococcus marinus (strain MIT 9301).